Reading from the N-terminus, the 495-residue chain is Cytochrome P450 2E1 (495 aa).

298 to 303 (FAGTET) serves as a coordination point for substrate. A heme-binding site is contributed by cysteine 437.

Belongs to the cytochrome P450 family. As to quaternary structure, interacts with chaperones HSP70 and HSP90; this interaction is required for initial targeting to mitochondria. Heme serves as cofactor.

The protein resides in the endoplasmic reticulum membrane. It localises to the microsome membrane. Its subcellular location is the mitochondrion inner membrane. The catalysed reaction is an organic molecule + reduced [NADPH--hemoprotein reductase] + O2 = an alcohol + oxidized [NADPH--hemoprotein reductase] + H2O + H(+). The enzyme catalyses (5Z,8Z,11Z)-eicosatrienoate + reduced [NADPH--hemoprotein reductase] + O2 = 19-hydroxy-(5Z,8Z,11Z)-eicosatrienoate + oxidized [NADPH--hemoprotein reductase] + H2O + H(+). It catalyses the reaction (5Z,8Z,11Z,14Z,17Z)-eicosapentaenoate + reduced [NADPH--hemoprotein reductase] + O2 = 19-hydroxy-(5Z,8Z,11Z,14Z,17Z)-eicosapentaenoate + oxidized [NADPH--hemoprotein reductase] + H2O + H(+). It carries out the reaction (4Z,7Z,10Z,13Z,16Z,19Z)-docosahexaenoate + reduced [NADPH--hemoprotein reductase] + O2 = 21-hydroxy-(4Z,7Z,10Z,13Z,16Z,19Z)-docosahexaenoate + oxidized [NADPH--hemoprotein reductase] + H2O + H(+). The catalysed reaction is dodecanoate + reduced [NADPH--hemoprotein reductase] + O2 = 11-hydroxydodecanoate + oxidized [NADPH--hemoprotein reductase] + H2O + H(+). The enzyme catalyses tetradecanoate + reduced [NADPH--hemoprotein reductase] + O2 = 13-hydroxytetradecanoate + oxidized [NADPH--hemoprotein reductase] + H2O + H(+). It catalyses the reaction 4-nitrophenol + NADPH + O2 + H(+) = 4-nitrocatechol + NADP(+) + H2O. It participates in lipid metabolism; fatty acid metabolism. Its activity is regulated as follows. The omega-1 hydroxylase activity is stimulated by cytochrome b5. A cytochrome P450 monooxygenase involved in the metabolism of fatty acids. Mechanistically, uses molecular oxygen inserting one oxygen atom into a substrate, and reducing the second into a water molecule, with two electrons provided by NADPH via cytochrome P450 reductase (NADPH--hemoprotein reductase). Catalyzes the hydroxylation of carbon-hydrogen bonds. Hydroxylates fatty acids specifically at the omega-1 position displaying the highest catalytic activity for saturated fatty acids. May be involved in the oxidative metabolism of xenobiotics. The chain is Cytochrome P450 2E1 (CYP2E1) from Sus scrofa (Pig).